The sequence spans 295 residues: F-box only protein 8 (295 aa).

An F-box domain is found at Thr-35–Arg-80.

This is F-box only protein 8 (FBX8) from Arabidopsis thaliana (Mouse-ear cress).